We begin with the raw amino-acid sequence, 130 residues long: Large ribosomal subunit protein bL19 (130 aa).

The protein belongs to the bacterial ribosomal protein bL19 family.

Functionally, this protein is located at the 30S-50S ribosomal subunit interface and may play a role in the structure and function of the aminoacyl-tRNA binding site. The protein is Large ribosomal subunit protein bL19 of Gluconobacter oxydans (strain 621H) (Gluconobacter suboxydans).